A 667-amino-acid polypeptide reads, in one-letter code: UvrABC system protein C (667 aa).

The GIY-YIG domain occupies 43–122; sequence AEPGCYLMRD…IKNQQPHFNV (80 aa). Residues 232 to 267 form the UVR domain; that stretch reads QELKVLLEKQMERYSDRMDYESAANIRDQIKGLEQL.

It belongs to the UvrC family. In terms of assembly, interacts with UvrB in an incision complex.

It is found in the cytoplasm. Its function is as follows. The UvrABC repair system catalyzes the recognition and processing of DNA lesions. UvrC both incises the 5' and 3' sides of the lesion. The N-terminal half is responsible for the 3' incision and the C-terminal half is responsible for the 5' incision. The protein is UvrABC system protein C of Prochlorococcus marinus (strain MIT 9313).